A 364-amino-acid polypeptide reads, in one-letter code: Probable dual-specificity RNA methyltransferase RlmN (364 aa).

The active-site Proton acceptor is Glu-107. The Radical SAM core domain occupies 113 to 346; the sequence is HDYGNSVCVT…ATIRREQGSD (234 aa). The cysteines at positions 120 and 351 are disulfide-linked. [4Fe-4S] cluster is bound by residues Cys-127, Cys-131, and Cys-134. S-adenosyl-L-methionine contacts are provided by residues 177–178, Ser-209, 232–234, and Asn-308; these read GE and SLH. Catalysis depends on Cys-351, which acts as the S-methylcysteine intermediate.

It belongs to the radical SAM superfamily. RlmN family. It depends on [4Fe-4S] cluster as a cofactor.

It localises to the cytoplasm. The enzyme catalyses adenosine(2503) in 23S rRNA + 2 reduced [2Fe-2S]-[ferredoxin] + 2 S-adenosyl-L-methionine = 2-methyladenosine(2503) in 23S rRNA + 5'-deoxyadenosine + L-methionine + 2 oxidized [2Fe-2S]-[ferredoxin] + S-adenosyl-L-homocysteine. It catalyses the reaction adenosine(37) in tRNA + 2 reduced [2Fe-2S]-[ferredoxin] + 2 S-adenosyl-L-methionine = 2-methyladenosine(37) in tRNA + 5'-deoxyadenosine + L-methionine + 2 oxidized [2Fe-2S]-[ferredoxin] + S-adenosyl-L-homocysteine. Functionally, specifically methylates position 2 of adenine 2503 in 23S rRNA and position 2 of adenine 37 in tRNAs. Confers resistance to some classes of antibiotics. This is Probable dual-specificity RNA methyltransferase RlmN from Staphylococcus aureus (strain Mu3 / ATCC 700698).